The following is a 390-amino-acid chain: Phosphoglycerate kinase (390 aa).

Substrate contacts are provided by residues 19–21, Arg34, 57–60, Arg115, and Arg148; these read DYN and HLGR. Residues Lys198, Gly289, Glu320, and 347–350 each bind ATP; that span reads GGDS.

This sequence belongs to the phosphoglycerate kinase family. As to quaternary structure, monomer.

It localises to the cytoplasm. The catalysed reaction is (2R)-3-phosphoglycerate + ATP = (2R)-3-phospho-glyceroyl phosphate + ADP. It functions in the pathway carbohydrate degradation; glycolysis; pyruvate from D-glyceraldehyde 3-phosphate: step 2/5. This is Phosphoglycerate kinase from Thermus thermophilus (strain ATCC BAA-163 / DSM 7039 / HB27).